A 360-amino-acid polypeptide reads, in one-letter code: Decorin (360 aa).

Positions 1–16 are cleaved as a signal peptide; the sequence is MKATIIFLLVAQVSWA. Residues 17 to 30 constitute a propeptide that is removed on maturation; sequence GPFQQKGLFDFMLE. Ser34 carries O-linked (Xyl...) (glycosaminoglycan) serine glycosylation. Intrachain disulfides connect Cys55–Cys61 and Cys59–Cys68. LRR repeat units lie at residues 74 to 94, 95 to 118, 119 to 142, 143 to 163, 164 to 187, 188 to 213, 214 to 234, 235 to 258, 259 to 282, 283 to 305, 306 to 335, and 336 to 360; these read EKVP…NNKI, TEIK…NNKI, SKIS…KNQL, KELP…ENEI, TKVR…TNPL, KSSG…DTNI, TTIP…GNKI, TKVD…FNSI, SAVD…NNKL, VKVP…NNNI, SAIG…SNPV, and QYWE…GNYK. N-linked (GlcNAc...) asparagine glycosylation is present at Asn212. Residues Asn263 and Asn304 are each glycosylated (N-linked (GlcNAc...) asparagine). A disulfide bond links Cys314 and Cys347.

This sequence belongs to the small leucine-rich proteoglycan (SLRP) family. SLRP class I subfamily. As to quaternary structure, binds to type I and type II collagen, fibronectin and TGF-beta. Forms a ternary complex with MFAP2 and ELN. Interacts with DPT. The attached glycosaminoglycan chain can be either chondroitin 4-sulfate, chondroitin 6-sulfate or dermatan sulfate, depending upon the tissue of origin.

Its subcellular location is the secreted. The protein resides in the extracellular space. The protein localises to the extracellular matrix. In terms of biological role, may affect the rate of fibrils formation. This chain is Decorin (DCN), found in Bos taurus (Bovine).